The primary structure comprises 106 residues: UPF0145 protein PFL_3418 (106 aa).

This sequence belongs to the UPF0145 family.

This Pseudomonas fluorescens (strain ATCC BAA-477 / NRRL B-23932 / Pf-5) protein is UPF0145 protein PFL_3418.